A 309-amino-acid chain; its full sequence is MELQFLGTGAGQPAKQRNVSSLALKLLDEINEVWMFDCGEGTQRQILETTIKPRKIRKIFITHLHGDHIFGLPGFLSSRSFQASEEQTDLDIYGPIGIKTYVLTSLKVSGARVPYQIHFHEFDDKSLGKIMETDKFVVYAERLAHTIFCMGYRVVQKDLEGTLDAEALKAAGVPFGPLFGKIKNGQDVELEDGRLICAKDYISAPKKGKIITIIGDTRKTSASVKLAKDADVLVHESTYGKGDERIARNHGHSTNMQAAQIAHEAGAKRLLLNHVSARFLGRDCRQMEKDAATIFENVKMVQDLEEVII.

Zn(2+) is bound by residues histidine 63, histidine 65, aspartate 67, histidine 68, histidine 145, aspartate 216, and histidine 274. Catalysis depends on aspartate 67, which acts as the Proton acceptor.

The protein belongs to the RNase Z family. As to quaternary structure, homodimer. It depends on Zn(2+) as a cofactor.

It catalyses the reaction Endonucleolytic cleavage of RNA, removing extra 3' nucleotides from tRNA precursor, generating 3' termini of tRNAs. A 3'-hydroxy group is left at the tRNA terminus and a 5'-phosphoryl group is left at the trailer molecule.. Functionally, zinc phosphodiesterase, which displays some tRNA 3'-processing endonuclease activity. Probably involved in tRNA maturation, by removing a 3'-trailer from precursor tRNA. In Streptococcus pyogenes serotype M6 (strain ATCC BAA-946 / MGAS10394), this protein is Ribonuclease Z.